The chain runs to 401 residues: Dual-specificity RNA methyltransferase RlmN (401 aa).

E114 acts as the Proton acceptor in catalysis. The Radical SAM core domain occupies 120 to 365 (DKGRGTLCVS…TMVRRTRGDD (246 aa)). A disulfide bridge connects residues C127 and C370. 3 residues coordinate [4Fe-4S] cluster: C134, C138, and C141. S-adenosyl-L-methionine contacts are provided by residues 187–188 (GE), S219, 241–243 (SLH), and N327. The S-methylcysteine intermediate role is filled by C370.

It belongs to the radical SAM superfamily. RlmN family. The cofactor is [4Fe-4S] cluster.

The protein resides in the cytoplasm. The catalysed reaction is adenosine(2503) in 23S rRNA + 2 reduced [2Fe-2S]-[ferredoxin] + 2 S-adenosyl-L-methionine = 2-methyladenosine(2503) in 23S rRNA + 5'-deoxyadenosine + L-methionine + 2 oxidized [2Fe-2S]-[ferredoxin] + S-adenosyl-L-homocysteine. It catalyses the reaction adenosine(37) in tRNA + 2 reduced [2Fe-2S]-[ferredoxin] + 2 S-adenosyl-L-methionine = 2-methyladenosine(37) in tRNA + 5'-deoxyadenosine + L-methionine + 2 oxidized [2Fe-2S]-[ferredoxin] + S-adenosyl-L-homocysteine. In terms of biological role, specifically methylates position 2 of adenine 2503 in 23S rRNA and position 2 of adenine 37 in tRNAs. m2A2503 modification seems to play a crucial role in the proofreading step occurring at the peptidyl transferase center and thus would serve to optimize ribosomal fidelity. The chain is Dual-specificity RNA methyltransferase RlmN from Xanthomonas axonopodis pv. citri (strain 306).